A 195-amino-acid chain; its full sequence is Nicotinamide riboside kinase 2 (195 aa).

Residue 9-17 (GVTNGGKTT) coordinates ATP. 2 residues coordinate Mg(2+): threonine 16 and aspartate 35. Aspartate 35 serves as the catalytic Proton acceptor. Substrate contacts are provided by residues 35-38 (DDFF) and 54-55 (WD). Arginine 130 lines the ATP pocket. Substrate is bound by residues arginine 131 and 136–137 (YM). ATP is bound by residues 134–136 (RTY) and 174–176 (KSP).

The protein belongs to the uridine kinase family. NRK subfamily. Monomer. Interacts with ITGB1 alone or when associated with alpha-7, but not with alpha-5. In terms of tissue distribution, expressed in skeletal muscle (at protein level).

It catalyses the reaction beta-nicotinamide D-riboside + ATP = beta-nicotinamide D-ribonucleotide + ADP + H(+). The enzyme catalyses beta-D-ribosylnicotinate + ATP = nicotinate beta-D-ribonucleotide + ADP + H(+). It functions in the pathway cofactor biosynthesis; NAD(+) biosynthesis. Functionally, catalyzes the phosphorylation of nicotinamide riboside (NR) and nicotinic acid riboside (NaR) to form nicotinamide mononucleotide (NMN) and nicotinic acid mononucleotide (NaMN). Reduces laminin matrix deposition and cell adhesion to laminin, but not to fibronectin. Involved in the regulation of PXN at the protein level and of PXN tyrosine phosphorylation. May play a role in the regulation of terminal myogenesis. In Mus musculus (Mouse), this protein is Nicotinamide riboside kinase 2 (Nmrk2).